We begin with the raw amino-acid sequence, 261 residues long: Shikimate dehydrogenase (NADP(+)) (261 aa).

Residues 13–15 and T60 contribute to the shikimate site; that span reads SLS. K64 (proton acceptor) is an active-site residue. Shikimate-binding residues include N85 and D100. Residues 121 to 125 and I202 contribute to the NADP(+) site; that span reads GAGGA. Y204 serves as a coordination point for shikimate. G225 is an NADP(+) binding site.

The protein belongs to the shikimate dehydrogenase family. In terms of assembly, homodimer.

It carries out the reaction shikimate + NADP(+) = 3-dehydroshikimate + NADPH + H(+). It participates in metabolic intermediate biosynthesis; chorismate biosynthesis; chorismate from D-erythrose 4-phosphate and phosphoenolpyruvate: step 4/7. Involved in the biosynthesis of the chorismate, which leads to the biosynthesis of aromatic amino acids. Catalyzes the reversible NADPH linked reduction of 3-dehydroshikimate (DHSA) to yield shikimate (SA). The chain is Shikimate dehydrogenase (NADP(+)) from Exiguobacterium sibiricum (strain DSM 17290 / CCUG 55495 / CIP 109462 / JCM 13490 / 255-15).